Reading from the N-terminus, the 293-residue chain is F-box only protein 6 (293 aa).

An F-box domain is found at 10–57 (LDSINELPENILLELFTHVPARQLLLNCRLVCSLWRDLIDLMTLWKRK). Residues 78 to 259 (FYFLRSLHRN…VTNSSIVVSP (182 aa)) enclose the FBA domain. Ser258 carries the post-translational modification Phosphoserine. Positions 261–271 (MTRNQASSEAQ) are enriched in polar residues. The disordered stretch occupies residues 261 to 285 (MTRNQASSEAQPGQKHGQEEAAQSP). Phosphoserine is present on Ser284.

In terms of assembly, interacts with VCP. Part of a SCF (SKP1-cullin-F-box) protein ligase complex. Interacts with CHEK1 and CUL1.

Its subcellular location is the cytoplasm. It functions in the pathway protein modification; protein ubiquitination. In terms of biological role, substrate-recognition component of some SCF (SKP1-CUL1-F-box protein)-type E3 ubiquitin ligase complexes. Involved in endoplasmic reticulum-associated degradation pathway (ERAD) for misfolded lumenal proteins by recognizing and binding sugar chains on unfolded glycoproteins that are retrotranslocated into the cytosol and promoting their ubiquitination and subsequent degradation. Able to recognize and bind denatured glycoproteins, which are modified with not only high-mannose but also complex-type oligosaccharides. Also recognizes sulfated glycans. Also involved in DNA damage response by specifically recognizing activated CHEK1 (phosphorylated on 'Ser-345'), promoting its ubiquitination and degradation. Ubiquitination of CHEK1 is required to ensure that activated CHEK1 does not accumulate as cells progress through S phase, or when replication forks encounter transient impediments during normal DNA replication. The chain is F-box only protein 6 (FBXO6) from Homo sapiens (Human).